Consider the following 257-residue polypeptide: Isoprenyl transferase (257 aa).

Residue aspartate 37 is part of the active site. Position 37 (aspartate 37) interacts with Mg(2+). Residues 38-41, tryptophan 42, arginine 50, histidine 54, and 82-84 contribute to the substrate site; these read GNGR and STE. Asparagine 85 (proton acceptor) is an active-site residue. Residues tryptophan 86, arginine 88, arginine 205, and 211–213 each bind substrate; that span reads RLS. Residue glutamate 224 participates in Mg(2+) binding.

This sequence belongs to the UPP synthase family. Homodimer. The cofactor is Mg(2+).

Functionally, catalyzes the condensation of isopentenyl diphosphate (IPP) with allylic pyrophosphates generating different type of terpenoids. This is Isoprenyl transferase from Shouchella clausii (strain KSM-K16) (Alkalihalobacillus clausii).